The following is a 268-amino-acid chain: Undecaprenyl-diphosphatase (268 aa).

7 helical membrane-spanning segments follow: residues 5–25 (TIAQALMLGVLEGFTEFIPVS), 43–63 (GKAFEILIQLGAILAVLSVYA), 84–104 (LGILIAFLPAAIIGVVAYQII), 107–127 (VLFETPLLICTMLILGGIVLL), 184–204 (AAEFSFFLAMPTMAGAFAYDL), 214–234 (ADLQIIGVGFIAAFVAAVLVV), and 247–267 (ALFGWWRIFIGVLGLIGVLVL).

It belongs to the UppP family.

It localises to the cell inner membrane. The catalysed reaction is di-trans,octa-cis-undecaprenyl diphosphate + H2O = di-trans,octa-cis-undecaprenyl phosphate + phosphate + H(+). In terms of biological role, catalyzes the dephosphorylation of undecaprenyl diphosphate (UPP). Confers resistance to bacitracin. The polypeptide is Undecaprenyl-diphosphatase (Chelativorans sp. (strain BNC1)).